The chain runs to 314 residues: Porphobilinogen deaminase (314 aa).

C234 bears the S-(dipyrrolylmethanemethyl)cysteine mark.

The protein belongs to the HMBS family. In terms of assembly, monomer. It depends on dipyrromethane as a cofactor.

The enzyme catalyses 4 porphobilinogen + H2O = hydroxymethylbilane + 4 NH4(+). It participates in porphyrin-containing compound metabolism; protoporphyrin-IX biosynthesis; coproporphyrinogen-III from 5-aminolevulinate: step 2/4. Functionally, tetrapolymerization of the monopyrrole PBG into the hydroxymethylbilane pre-uroporphyrinogen in several discrete steps. The polypeptide is Porphobilinogen deaminase (Mycobacterium marinum (strain ATCC BAA-535 / M)).